Reading from the N-terminus, the 429-residue chain is [LysW]-aminoadipate semialdehyde transaminase (429 aa).

Residues 112-113 and Phe139 each bind pyridoxal 5'-phosphate; that span reads GT. Residue Arg142 coordinates substrate. Position 226–229 (226–229) interacts with pyridoxal 5'-phosphate; the sequence is DEIQ. Residue Lys255 is modified to N6-(pyridoxal phosphate)lysine. Substrate is bound at residue Thr283. Thr284 lines the pyridoxal 5'-phosphate pocket. The interval 408 to 429 is disordered; that stretch reads LRAQQSEMGQQQVSQGESVQTE. Residues 411–429 are compositionally biased toward low complexity; sequence QQSEMGQQQVSQGESVQTE.

It belongs to the class-III pyridoxal-phosphate-dependent aminotransferase family. LysJ subfamily. In terms of assembly, homodimer. Requires pyridoxal 5'-phosphate as cofactor.

It is found in the cytoplasm. It catalyses the reaction [amino-group carrier protein]-C-terminal-gamma-(L-lysyl)-L-glutamate + 2-oxoglutarate = [amino-group carrier protein]-C-terminal-N-(1-carboxy-5-oxopentan-1-yl)-L-glutamine + L-glutamate. It functions in the pathway amino-acid biosynthesis; L-lysine biosynthesis via AAA pathway; L-lysine from L-alpha-aminoadipate (Thermus route): step 4/5. In terms of biological role, catalyzes the transfer of the amino group of L-glutamate to [LysW]-aminoadipate 6-semialdehyde, generating [LysW]-gamma-L-lysine. The sequence is that of [LysW]-aminoadipate semialdehyde transaminase from Deinococcus radiodurans (strain ATCC 13939 / DSM 20539 / JCM 16871 / CCUG 27074 / LMG 4051 / NBRC 15346 / NCIMB 9279 / VKM B-1422 / R1).